Reading from the N-terminus, the 245-residue chain is MDNALYVGLSRQMTLRRELDIVANNIANANTTGFKVEDLMVRTEQAKPAKTLDGSSPVKFVMDTGVARNFTQGPMTKTGGDYDLAINGMGFFKVQANGGERYTRDGRFTTNPEGILVTQAGAPVLDDGGGQITIDPRLGPVTVGKDGIVSQGAIRVGRIGLVRPDDLSTFAKDGDNLYRNTTNTAPQPVTDAQIHQGMLEASNVQPVIEITKLIEIQRAYESVAKMMDNTAELSRSAVERLGKIN.

The protein belongs to the flagella basal body rod proteins family. The basal body constitutes a major portion of the flagellar organelle and consists of five rings (E,L,P,S, and M) mounted on a central rod. The rod consists of about 26 subunits of FlgG in the distal portion, and FlgB, FlgC and FlgF are thought to build up the proximal portion of the rod with about 6 subunits each.

It localises to the bacterial flagellum basal body. The sequence is that of Flagellar basal-body rod protein FlgF (flgF) from Caulobacter vibrioides (strain ATCC 19089 / CIP 103742 / CB 15) (Caulobacter crescentus).